The sequence spans 547 residues: Chaperonin GroEL (547 aa).

Residues 30–33 (TLGP), Lys51, 87–91 (DGTTT), Gly415, and Asp495 contribute to the ATP site. The tract at residues 525–547 (PDEKEAGGGAPDMGGMGGMGGMM) is disordered. A compositionally biased stretch (gly residues) spans 531-547 (GGGAPDMGGMGGMGGMM).

The protein belongs to the chaperonin (HSP60) family. As to quaternary structure, forms a cylinder of 14 subunits composed of two heptameric rings stacked back-to-back. Interacts with the co-chaperonin GroES.

The protein resides in the cytoplasm. The catalysed reaction is ATP + H2O + a folded polypeptide = ADP + phosphate + an unfolded polypeptide.. Its function is as follows. Together with its co-chaperonin GroES, plays an essential role in assisting protein folding. The GroEL-GroES system forms a nano-cage that allows encapsulation of the non-native substrate proteins and provides a physical environment optimized to promote and accelerate protein folding. The sequence is that of Chaperonin GroEL from Chromohalobacter salexigens (strain ATCC BAA-138 / DSM 3043 / CIP 106854 / NCIMB 13768 / 1H11).